The following is a 141-amino-acid chain: VLSPDDKKHVKAAWGKVGEHAGEYGAEALERMFLSFPTTKTYFPHFNLSHGSDQVKGHGKKVADALTLAVGHVDDMPHALSKLSDLHAHKLRVDPVNFKLLSHCLLVTLAAHLPAEFTPAVHASLDKFLASVSTVLTSKYR.

The Globin domain maps to 1–141; that stretch reads VLSPDDKKHV…VSTVLTSKYR (141 aa). Serine 3 is modified (phosphoserine). N6-succinyllysine is present on residues lysine 7 and lysine 11. Lysine 16 is subject to N6-acetyllysine; alternate. Lysine 16 bears the N6-succinyllysine; alternate mark. Residue tyrosine 24 is modified to Phosphotyrosine. Serine 35 is modified (phosphoserine). Lysine 40 carries the post-translational modification N6-succinyllysine. At serine 49 the chain carries Phosphoserine. Residue histidine 58 participates in O2 binding. A heme b-binding site is contributed by histidine 87. Serine 102 is modified (phosphoserine). At threonine 108 the chain carries Phosphothreonine. 2 positions are modified to phosphoserine: serine 124 and serine 131. Residues threonine 134 and threonine 137 each carry the phosphothreonine modification. Serine 138 carries the post-translational modification Phosphoserine.

Belongs to the globin family. Heterotetramer of two alpha chains and two beta chains. Red blood cells.

Its function is as follows. Involved in oxygen transport from the lung to the various peripheral tissues. Functionally, hemopressin acts as an antagonist peptide of the cannabinoid receptor CNR1. Hemopressin-binding efficiently blocks cannabinoid receptor CNR1 and subsequent signaling. This is Hemoglobin subunit alpha (HBA) from Cercocebus atys (Sooty mangabey).